The following is an 81-amino-acid chain: Photosystem I iron-sulfur center (81 aa).

2 4Fe-4S ferredoxin-type domains span residues 2–31 (SHTV…MIPW) and 39–68 (IASS…VRVY). Residues Cys11, Cys14, Cys17, Cys21, Cys48, Cys51, Cys54, and Cys58 each coordinate [4Fe-4S] cluster.

In terms of assembly, the eukaryotic PSI reaction center is composed of at least 11 subunits. [4Fe-4S] cluster is required as a cofactor.

It is found in the plastid. Its subcellular location is the chloroplast thylakoid membrane. The enzyme catalyses reduced [plastocyanin] + hnu + oxidized [2Fe-2S]-[ferredoxin] = oxidized [plastocyanin] + reduced [2Fe-2S]-[ferredoxin]. Functionally, apoprotein for the two 4Fe-4S centers FA and FB of photosystem I (PSI); essential for photochemical activity. FB is the terminal electron acceptor of PSI, donating electrons to ferredoxin. The C-terminus interacts with PsaA/B/D and helps assemble the protein into the PSI complex. Required for binding of PsaD and PsaE to PSI. PSI is a plastocyanin-ferredoxin oxidoreductase, converting photonic excitation into a charge separation, which transfers an electron from the donor P700 chlorophyll pair to the spectroscopically characterized acceptors A0, A1, FX, FA and FB in turn. The chain is Photosystem I iron-sulfur center from Chaetosphaeridium globosum (Charophycean green alga).